The following is a 428-amino-acid chain: Adenylosuccinate synthetase (428 aa).

Residues 12-18 (GDEGKGK) and 40-42 (GHS) each bind GTP. The active-site Proton acceptor is Asp13. Mg(2+) is bound by residues Asp13 and Gly40. Residues 13 to 16 (DEGK), 38 to 41 (NAGH), Thr128, Arg142, Gln223, Thr238, and Arg302 each bind IMP. His41 acts as the Proton donor in catalysis. 298-304 (VTTGRPR) serves as a coordination point for substrate. GTP contacts are provided by residues Arg304, 330 to 332 (KLD), and 412 to 414 (GTG).

This sequence belongs to the adenylosuccinate synthetase family. Homodimer. Requires Mg(2+) as cofactor.

The protein localises to the cytoplasm. It catalyses the reaction IMP + L-aspartate + GTP = N(6)-(1,2-dicarboxyethyl)-AMP + GDP + phosphate + 2 H(+). The protein operates within purine metabolism; AMP biosynthesis via de novo pathway; AMP from IMP: step 1/2. Functionally, plays an important role in the de novo pathway of purine nucleotide biosynthesis. Catalyzes the first committed step in the biosynthesis of AMP from IMP. This is Adenylosuccinate synthetase from Bifidobacterium longum (strain NCC 2705).